Reading from the N-terminus, the 188-residue chain is dCTP deaminase (188 aa).

Residue 109 to 114 participates in dCTP binding; that stretch reads KSTYAR. The active-site Proton donor/acceptor is Glu-135. 3 residues coordinate dCTP: Gln-154, Tyr-168, and Gln-178.

It belongs to the dCTP deaminase family. In terms of assembly, homotrimer.

It carries out the reaction dCTP + H2O + H(+) = dUTP + NH4(+). The protein operates within pyrimidine metabolism; dUMP biosynthesis; dUMP from dCTP (dUTP route): step 1/2. Its function is as follows. Catalyzes the deamination of dCTP to dUTP. The protein is dCTP deaminase of Helicobacter acinonychis (strain Sheeba).